Consider the following 227-residue polypeptide: ATP-dependent dethiobiotin synthetase BioD (227 aa).

13-18 (EVGKSV) provides a ligand contact to ATP. Residue Ser17 participates in Mg(2+) binding. Lys38 is a catalytic residue. Ser42 is a binding site for substrate. ATP contacts are provided by residues Asp55, 116 to 119 (EGAG), and 176 to 177 (ND). Positions 55 and 116 each coordinate Mg(2+).

This sequence belongs to the dethiobiotin synthetase family. Homodimer. The cofactor is Mg(2+).

The protein localises to the cytoplasm. It catalyses the reaction (7R,8S)-7,8-diammoniononanoate + CO2 + ATP = (4R,5S)-dethiobiotin + ADP + phosphate + 3 H(+). It functions in the pathway cofactor biosynthesis; biotin biosynthesis; biotin from 7,8-diaminononanoate: step 1/2. Catalyzes a mechanistically unusual reaction, the ATP-dependent insertion of CO2 between the N7 and N8 nitrogen atoms of 7,8-diaminopelargonic acid (DAPA, also called 7,8-diammoniononanoate) to form a ureido ring. This Serratia marcescens protein is ATP-dependent dethiobiotin synthetase BioD.